A 308-amino-acid chain; its full sequence is Peptidyl-prolyl cis-trans isomerase CYP8 (308 aa).

One can recognise a PPIase cyclophilin-type domain in the interval 56-215 (FTDPESSEEA…QPITIGYISS (160 aa)).

It carries out the reaction [protein]-peptidylproline (omega=180) = [protein]-peptidylproline (omega=0). In terms of biological role, PPIases accelerate the folding of proteins. It catalyzes the cis-trans isomerization of proline imidic peptide bonds in oligopeptides. This is Peptidyl-prolyl cis-trans isomerase CYP8 (CPR8) from Saccharomyces cerevisiae (strain ATCC 204508 / S288c) (Baker's yeast).